The primary structure comprises 212 residues: Holliday junction branch migration complex subunit RuvA (212 aa).

A domain I region spans residues 1–63 (MIAKLKGLID…EDAISLFGFL (63 aa)). Positions 64 to 142 (ETGERDWFRL…KIALGGFSPG (79 aa)) are domain II. Positions 143–155 (GIKDALSASAPLP) are flexible linker. The tract at residues 156-212 (AASGRMEDAVSALVNLGYKRLEAFQAVGETARELGDEADSSALIRAALKHLGKGLLG) is domain III.

This sequence belongs to the RuvA family. In terms of assembly, homotetramer. Forms an RuvA(8)-RuvB(12)-Holliday junction (HJ) complex. HJ DNA is sandwiched between 2 RuvA tetramers; dsDNA enters through RuvA and exits via RuvB. An RuvB hexamer assembles on each DNA strand where it exits the tetramer. Each RuvB hexamer is contacted by two RuvA subunits (via domain III) on 2 adjacent RuvB subunits; this complex drives branch migration. In the full resolvosome a probable DNA-RuvA(4)-RuvB(12)-RuvC(2) complex forms which resolves the HJ.

The protein resides in the cytoplasm. The RuvA-RuvB-RuvC complex processes Holliday junction (HJ) DNA during genetic recombination and DNA repair, while the RuvA-RuvB complex plays an important role in the rescue of blocked DNA replication forks via replication fork reversal (RFR). RuvA specifically binds to HJ cruciform DNA, conferring on it an open structure. The RuvB hexamer acts as an ATP-dependent pump, pulling dsDNA into and through the RuvAB complex. HJ branch migration allows RuvC to scan DNA until it finds its consensus sequence, where it cleaves and resolves the cruciform DNA. In Paramagnetospirillum magneticum (strain ATCC 700264 / AMB-1) (Magnetospirillum magneticum), this protein is Holliday junction branch migration complex subunit RuvA.